Consider the following 382-residue polypeptide: UDP-N-acetylglucosamine--N-acetylmuramyl-(pentapeptide) pyrophosphoryl-undecaprenol N-acetylglucosamine transferase (382 aa).

UDP-N-acetyl-alpha-D-glucosamine contacts are provided by residues 17–19, asparagine 137, arginine 179, serine 213, and glutamine 308; that span reads TAG.

Belongs to the glycosyltransferase 28 family. MurG subfamily.

The protein localises to the cell membrane. The catalysed reaction is di-trans,octa-cis-undecaprenyl diphospho-N-acetyl-alpha-D-muramoyl-L-alanyl-D-glutamyl-meso-2,6-diaminopimeloyl-D-alanyl-D-alanine + UDP-N-acetyl-alpha-D-glucosamine = di-trans,octa-cis-undecaprenyl diphospho-[N-acetyl-alpha-D-glucosaminyl-(1-&gt;4)]-N-acetyl-alpha-D-muramoyl-L-alanyl-D-glutamyl-meso-2,6-diaminopimeloyl-D-alanyl-D-alanine + UDP + H(+). Its pathway is cell wall biogenesis; peptidoglycan biosynthesis. Cell wall formation. Catalyzes the transfer of a GlcNAc subunit on undecaprenyl-pyrophosphoryl-MurNAc-pentapeptide (lipid intermediate I) to form undecaprenyl-pyrophosphoryl-MurNAc-(pentapeptide)GlcNAc (lipid intermediate II). This Rhodococcus jostii (strain RHA1) protein is UDP-N-acetylglucosamine--N-acetylmuramyl-(pentapeptide) pyrophosphoryl-undecaprenol N-acetylglucosamine transferase.